The following is a 324-amino-acid chain: ATP-dependent 6-phosphofructokinase (324 aa).

Gly-15 lines the ATP pocket. 25-29 (RGVVR) contacts ADP. ATP contacts are provided by residues 76–77 (RF) and 106–109 (GDGS). Asp-107 is a binding site for Mg(2+). A substrate-binding site is contributed by 130-132 (TID). Asp-132 (proton acceptor) is an active-site residue. An ADP-binding site is contributed by Arg-159. Residues Arg-167 and 174–176 (MGR) each bind substrate. ADP-binding positions include 190–192 (GCE), Lys-216, and 218–220 (KRH). Substrate contacts are provided by residues Glu-227, Arg-248, and 254 to 257 (HIQR).

Belongs to the phosphofructokinase type A (PFKA) family. ATP-dependent PFK group I subfamily. Prokaryotic clade 'B1' sub-subfamily. As to quaternary structure, homotetramer. It depends on Mg(2+) as a cofactor.

Its subcellular location is the cytoplasm. It carries out the reaction beta-D-fructose 6-phosphate + ATP = beta-D-fructose 1,6-bisphosphate + ADP + H(+). Its pathway is carbohydrate degradation; glycolysis; D-glyceraldehyde 3-phosphate and glycerone phosphate from D-glucose: step 3/4. Allosterically activated by ADP and other diphosphonucleosides, and allosterically inhibited by phosphoenolpyruvate. In terms of biological role, catalyzes the phosphorylation of D-fructose 6-phosphate to fructose 1,6-bisphosphate by ATP, the first committing step of glycolysis. The chain is ATP-dependent 6-phosphofructokinase from Haemophilus ducreyi (strain 35000HP / ATCC 700724).